The sequence spans 809 residues: TLR4 interactor with leucine rich repeats (809 aa).

A signal peptide spans 1–25 (MEGVGAVRFWLVVCGCLAFPPRAES). The region spanning 26 to 57 (VCPERCDCQHPQHLLCTNRGLRAVPKTSSLPS) is the LRRNT domain. The Extracellular segment spans residues 26-694 (VCPERCDCQH…AGGRGGVDYQ (669 aa)). 12 LRR repeats span residues 61-81 (VLTY…DFHR), 84-105 (QLRR…TFEK), 108-129 (RLEE…TLAP), 132-153 (KLRI…SFEG), 156-177 (SLVK…VFAP), 180-201 (NLLY…AFSQ), 204-223 (KLRF…RHAA), 230-251 (SLST…VFQH), 254-275 (RLGL…AFWG), 278-298 (ALRE…TLLE), 302-323 (SLEA…TFGH), and 326-347 (RLRE…IFAA). A glycan (N-linked (GlcNAc...) asparagine) is linked at asparagine 73. In terms of domain architecture, LRRCT spans 359–416 (NGWTCDCRLRGLKRWMGNWHSQGRLLTVFVQCRHPPALRGKYLDYLDDQLLQNGSCVD). N-linked (GlcNAc...) asparagine glycosylation is present at asparagine 411. Disordered regions lie at residues 412–462 (GSCV…RGRL) and 483–563 (RLSR…SAVQ). The span at 421-436 (PTAGSRQWPLPTSSEE) shows a compositional bias: polar residues. Residues 488 to 506 (GPGPHQGPSAAAPGSAPQS) are compositionally biased toward low complexity. The segment covering 521–543 (ANLSQTEPTPTSEPASGTPSARD) has biased composition (polar residues). Low complexity predominate over residues 554–563 (ASEQQESAVQ). An N-linked (GlcNAc...) asparagine glycan is attached at asparagine 587. A helical transmembrane segment spans residues 695-715 (LLTLVLLAVNALLVLLALAAW). Residues 716–809 (GSRWLRRKLR…EDHLLQRFAD (94 aa)) lie on the Cytoplasmic side of the membrane. Serine 796 carries the phosphoserine modification.

As to quaternary structure, belongs to the lipopolysaccharide (LPS) receptor, a multi-protein complex containing at least CD14, MD-2 and TLR4. Interacts with TLR4; this interaction is greatly enhanced by LPS stimulation. Interacts with LPS. Post-translationally, N-glycolysaled. As to expression, highly expressed in brain, spinal cord and lung.

The protein resides in the membrane. Its function is as follows. Component of the TLR4 signaling complex. Mediates the innate immune response to bacterial lipopolysaccharide (LPS) leading to cytokine secretion. The sequence is that of TLR4 interactor with leucine rich repeats (Tril) from Mus musculus (Mouse).